The chain runs to 540 residues: Membrane protein insertase YidC (540 aa).

5 consecutive transmembrane segments (helical) span residues 7–27, 345–365, 415–435, 453–473, and 494–514; these read LLVL…QMDY, IVSN…GILY, LGGC…YWTF, LSAQ…MFLL, and PLIF…YWLV.

Belongs to the OXA1/ALB3/YidC family. Type 1 subfamily. In terms of assembly, interacts with the Sec translocase complex via SecD. Specifically interacts with transmembrane segments of nascent integral membrane proteins during membrane integration.

The protein localises to the cell inner membrane. Required for the insertion and/or proper folding and/or complex formation of integral membrane proteins into the membrane. Involved in integration of membrane proteins that insert both dependently and independently of the Sec translocase complex, as well as at least some lipoproteins. Aids folding of multispanning membrane proteins. In Mannheimia succiniciproducens (strain KCTC 0769BP / MBEL55E), this protein is Membrane protein insertase YidC.